Here is a 366-residue protein sequence, read N- to C-terminus: UDP-N-acetylglucosamine--N-acetylmuramyl-(pentapeptide) pyrophosphoryl-undecaprenol N-acetylglucosamine transferase (366 aa).

Residues 10-12 (TGG), asparagine 124, arginine 165, serine 195, isoleucine 250, and glutamine 295 each bind UDP-N-acetyl-alpha-D-glucosamine.

It belongs to the glycosyltransferase 28 family. MurG subfamily.

The protein localises to the cell inner membrane. It catalyses the reaction di-trans,octa-cis-undecaprenyl diphospho-N-acetyl-alpha-D-muramoyl-L-alanyl-D-glutamyl-meso-2,6-diaminopimeloyl-D-alanyl-D-alanine + UDP-N-acetyl-alpha-D-glucosamine = di-trans,octa-cis-undecaprenyl diphospho-[N-acetyl-alpha-D-glucosaminyl-(1-&gt;4)]-N-acetyl-alpha-D-muramoyl-L-alanyl-D-glutamyl-meso-2,6-diaminopimeloyl-D-alanyl-D-alanine + UDP + H(+). It participates in cell wall biogenesis; peptidoglycan biosynthesis. Its function is as follows. Cell wall formation. Catalyzes the transfer of a GlcNAc subunit on undecaprenyl-pyrophosphoryl-MurNAc-pentapeptide (lipid intermediate I) to form undecaprenyl-pyrophosphoryl-MurNAc-(pentapeptide)GlcNAc (lipid intermediate II). The polypeptide is UDP-N-acetylglucosamine--N-acetylmuramyl-(pentapeptide) pyrophosphoryl-undecaprenol N-acetylglucosamine transferase (Thermodesulfovibrio yellowstonii (strain ATCC 51303 / DSM 11347 / YP87)).